The chain runs to 287 residues: Rhomboid-like protein 18 (287 aa).

The next 6 helical transmembrane spans lie at 10-30 (NAPV…FFGI), 53-73 (LIIS…LYLL), 90-110 (VFIF…LSLT), 117-137 (LLTS…FLDI), 145-165 (VLGV…QLLL), and 172-192 (IFTG…IFGI). Residues 244–284 (EPSEEAIATLVSMGFDQNAARQALVHARNDVNAATNILLEA) enclose the UBA domain.

Belongs to the peptidase S54 family.

The protein resides in the membrane. Its function is as follows. Probable rhomboid-type serine protease that catalyzes intramembrane proteolysis. In Arabidopsis thaliana (Mouse-ear cress), this protein is Rhomboid-like protein 18.